The following is a 238-amino-acid chain: Sugar fermentation stimulation protein homolog (238 aa).

Belongs to the SfsA family.

The sequence is that of Sugar fermentation stimulation protein homolog from Klebsiella pneumoniae subsp. pneumoniae (strain ATCC 700721 / MGH 78578).